The following is a 156-amino-acid chain: Ribosomal RNA large subunit methyltransferase H (156 aa).

Residues Leu-73, Gly-104, and 123 to 128 (LSPLTL) contribute to the S-adenosyl-L-methionine site.

Belongs to the RNA methyltransferase RlmH family. In terms of assembly, homodimer.

It is found in the cytoplasm. It catalyses the reaction pseudouridine(1915) in 23S rRNA + S-adenosyl-L-methionine = N(3)-methylpseudouridine(1915) in 23S rRNA + S-adenosyl-L-homocysteine + H(+). Functionally, specifically methylates the pseudouridine at position 1915 (m3Psi1915) in 23S rRNA. The protein is Ribosomal RNA large subunit methyltransferase H of Yersinia enterocolitica serotype O:8 / biotype 1B (strain NCTC 13174 / 8081).